The following is a 481-amino-acid chain: p-aminobenzoyl-glutamate hydrolase subunit B (481 aa).

Forms a heterodimer with AbgA. Requires Mn(2+) as cofactor.

Functionally, component of the p-aminobenzoyl-glutamate hydrolase multicomponent enzyme system which catalyzes the cleavage of p-aminobenzoyl-glutamate (PABA-GLU) to form p-aminobenzoate (PABA) and glutamate. AbgAB does not degrade dipeptides and the physiological role of abgABT should be clarified. This chain is p-aminobenzoyl-glutamate hydrolase subunit B (abgB), found in Escherichia coli (strain K12).